The sequence spans 226 residues: Ribosome maturation factor RimP (226 aa).

The segment at 190-226 (VFPDTTRPQPGGKTGQRKKAQPKKPARGGAPHDDTTD) is disordered. Residues 204 to 215 (GQRKKAQPKKPA) show a composition bias toward basic residues.

Belongs to the RimP family.

The protein resides in the cytoplasm. In terms of biological role, required for maturation of 30S ribosomal subunits. The sequence is that of Ribosome maturation factor RimP from Nitratidesulfovibrio vulgaris (strain DSM 19637 / Miyazaki F) (Desulfovibrio vulgaris).